We begin with the raw amino-acid sequence, 200 residues long: Dual-action ribosomal maturation protein DarP (200 aa).

2 disordered regions span residues 1 to 25 (MTRK…DRPS) and 177 to 200 (TASG…DDEA). Over residues 12–25 (HAAEVDDNGYDRPS) the composition is skewed to basic and acidic residues. A compositionally biased stretch (acidic residues) spans 184–200 (GDDEAADEAGDDHDDEA).

The protein belongs to the DarP family.

The protein localises to the cytoplasm. Its function is as follows. Member of a network of 50S ribosomal subunit biogenesis factors which assembles along the 30S-50S interface, preventing incorrect 23S rRNA structures from forming. Promotes peptidyl transferase center (PTC) maturation. In Burkholderia ambifaria (strain MC40-6), this protein is Dual-action ribosomal maturation protein DarP.